Here is a 416-residue protein sequence, read N- to C-terminus: Probable 26S proteasome regulatory subunit rpn-6.2 (416 aa).

Residues 217 to 386 (YKTSFSYFYE…DTVVVYPKAD (170 aa)) enclose the PCI domain.

Belongs to the proteasome subunit S9 family. Component of the lid subcomplex of the 19S proteasome regulatory particle complex (also named PA700 complex). The 26S proteasome consists of a 20S proteasome core and two 19S regulatory subunits.

Functionally, component of the lid subcomplex of the 26S proteasome, a multiprotein complex involved in the ATP-dependent degradation of ubiquitinated proteins. In the complex, rpn-6.2 is required for proteasome assembly. This chain is Probable 26S proteasome regulatory subunit rpn-6.2 (rpn-6.2), found in Caenorhabditis elegans.